A 130-amino-acid polypeptide reads, in one-letter code: S-adenosylmethionine decarboxylase proenzyme (130 aa).

S66 serves as the catalytic Schiff-base intermediate with substrate; via pyruvic acid. At S66 the chain carries Pyruvic acid (Ser); by autocatalysis. H71 (proton acceptor; for processing activity) is an active-site residue. C86 functions as the Proton donor; for catalytic activity in the catalytic mechanism.

It belongs to the prokaryotic AdoMetDC family. Type 1 subfamily. Heterotetramer of two alpha and two beta chains arranged as a dimer of alpha/beta heterodimers. The cofactor is pyruvate. In terms of processing, is synthesized initially as an inactive proenzyme. Formation of the active enzyme involves a self-maturation process in which the active site pyruvoyl group is generated from an internal serine residue via an autocatalytic post-translational modification. Two non-identical subunits are generated from the proenzyme in this reaction, and the pyruvate is formed at the N-terminus of the alpha chain, which is derived from the carboxyl end of the proenzyme. The post-translation cleavage follows an unusual pathway, termed non-hydrolytic serinolysis, in which the side chain hydroxyl group of the serine supplies its oxygen atom to form the C-terminus of the beta chain, while the remainder of the serine residue undergoes an oxidative deamination to produce ammonia and the pyruvoyl group blocking the N-terminus of the alpha chain.

It catalyses the reaction S-adenosyl-L-methionine + H(+) = S-adenosyl 3-(methylsulfanyl)propylamine + CO2. It participates in amine and polyamine biosynthesis; S-adenosylmethioninamine biosynthesis; S-adenosylmethioninamine from S-adenosyl-L-methionine: step 1/1. In terms of biological role, catalyzes the decarboxylation of S-adenosylmethionine to S-adenosylmethioninamine (dcAdoMet), the propylamine donor required for the synthesis of the polyamines spermine and spermidine from the diamine putrescine. This is S-adenosylmethionine decarboxylase proenzyme from Bacillus cytotoxicus (strain DSM 22905 / CIP 110041 / 391-98 / NVH 391-98).